Consider the following 234-residue polypeptide: Small ribosomal subunit protein eS4 (234 aa).

One can recognise an S4 RNA-binding; degenerate domain in the interval 38–99 (IPLLIALRDY…GNDYLVSYDR (62 aa)).

This sequence belongs to the eukaryotic ribosomal protein eS4 family.

The sequence is that of Small ribosomal subunit protein eS4 (rps4e) from Picrophilus torridus (strain ATCC 700027 / DSM 9790 / JCM 10055 / NBRC 100828 / KAW 2/3).